The chain runs to 205 residues: Mediator of RNA polymerase II transcription subunit 29 (205 aa).

The segment covering 1–27 (MNPNMNMMQMSGPPMMQVSPMMQSSPQ) has biased composition (low complexity). Residues 1-65 (MNPNMNMMQM…QQQQQQAEKL (65 aa)) are disordered. Residues 28–38 (PMMPTGPPGPV) show a composition bias toward pro residues. Residues 39 to 61 (PMQQQHQQQQQQQQQQQQQQQQQ) are compositionally biased toward low complexity.

Belongs to the Mediator complex subunit 29 family. In terms of assembly, component of the Mediator complex.

Its subcellular location is the nucleus. Component of the Mediator complex, a coactivator involved in the regulated transcription of nearly all RNA polymerase II-dependent genes. Mediator functions as a bridge to convey information from gene-specific regulatory proteins to the basal RNA polymerase II transcription machinery. Mediator is recruited to promoters by direct interactions with regulatory proteins and serves as a scaffold for the assembly of a functional preinitiation complex with RNA polymerase II and the general transcription factors. The protein is Mediator of RNA polymerase II transcription subunit 29 (ix) of Drosophila virilis (Fruit fly).